The primary structure comprises 285 residues: MGLKFAYSKDPSSLKYLSNKKVFGLLGVPFDSTSTYKPGSRFGPLMIRQASYNFENYSLHYRKKLDVPIIDLGDIEVILGDFKNTCRNISEKVQEVLKKGMIPIVLGGEHSITYGVVKTFDLSDVTILHFDAHMDMANTYAGKKFSHATVMRRIYELHPKKIVQIGVRSCTKEEHEFVLNENIKYYTSRDIIEKFNMVLNEINKLDGPFYVTVDIDVLDPGYAPGVGNPTPVGITPYHMEKFIEKIARKKIIGIDIVEVATDRIGDPAAMNAAKILYDFLFAIKI.

The Mn(2+) site is built by histidine 110, aspartate 131, histidine 133, aspartate 135, aspartate 214, and aspartate 216.

This sequence belongs to the arginase family. The cofactor is Mn(2+).

This is an uncharacterized protein from Methanothermus fervidus.